Consider the following 238-residue polypeptide: Putative ABC transporter ATP-binding protein AF_1841 (238 aa).

Residues isoleucine 8–isoleucine 238 form the ABC transporter domain. Glycine 41 to serine 48 provides a ligand contact to ATP.

This sequence belongs to the ABC transporter superfamily.

Its subcellular location is the cell membrane. Its function is as follows. Probably part of an ABC transporter complex. Responsible for energy coupling to the transport system. The chain is Putative ABC transporter ATP-binding protein AF_1841 from Archaeoglobus fulgidus (strain ATCC 49558 / DSM 4304 / JCM 9628 / NBRC 100126 / VC-16).